We begin with the raw amino-acid sequence, 952 residues long: Protein translocase subunit SecA (952 aa).

ATP contacts are provided by residues Gln135, 153 to 157, and Asp575; that span reads GEGKT. The segment covering 907 to 921 has biased composition (low complexity); it reads AAPAAAIPGVSAKAA. Residues 907–946 are disordered; it reads AAPAAAIPGVSAKAATQSTTPAAKEIGRNDPCPCGSGKKY. The Zn(2+) site is built by Cys938, Cys940, Cys949, and Cys950.

This sequence belongs to the SecA family. Monomer and homodimer. Part of the essential Sec protein translocation apparatus which comprises SecA, SecYEG and auxiliary proteins SecDF. Other proteins may also be involved. Requires Zn(2+) as cofactor.

It localises to the cell membrane. The protein resides in the cytoplasm. The enzyme catalyses ATP + H2O + cellular proteinSide 1 = ADP + phosphate + cellular proteinSide 2.. Its function is as follows. Part of the Sec protein translocase complex. Interacts with the SecYEG preprotein conducting channel. Has a central role in coupling the hydrolysis of ATP to the transfer of proteins into and across the cell membrane, serving as an ATP-driven molecular motor driving the stepwise translocation of polypeptide chains across the membrane. In Dehalococcoides mccartyi (strain CBDB1), this protein is Protein translocase subunit SecA.